Here is a 312-residue protein sequence, read N- to C-terminus: Porphobilinogen deaminase (312 aa).

The residue at position 243 (Cys-243) is an S-(dipyrrolylmethanemethyl)cysteine.

The protein belongs to the HMBS family. As to quaternary structure, monomer. Requires dipyrromethane as cofactor.

The catalysed reaction is 4 porphobilinogen + H2O = hydroxymethylbilane + 4 NH4(+). Its pathway is porphyrin-containing compound metabolism; protoporphyrin-IX biosynthesis; coproporphyrinogen-III from 5-aminolevulinate: step 2/4. Its function is as follows. Tetrapolymerization of the monopyrrole PBG into the hydroxymethylbilane pre-uroporphyrinogen in several discrete steps. This is Porphobilinogen deaminase from Vibrio vulnificus (strain CMCP6).